Here is a 56-residue protein sequence, read N- to C-terminus: Light-harvesting protein B-880 beta chain (56 aa).

Residues 1-22 lie on the Cytoplasmic side of the membrane; it reads AEIDRPVSLSGLTEGEAREFHG. The a bacteriochlorophyll site is built by histidine 21 and histidine 39. The chain crosses the membrane as a helical span at residues 23–45; sequence VFMTSFMVFIAVAIVAHILAWMW. At 46–56 the chain is on the periplasmic side; that stretch reads RPWIPGPEGYA.

Belongs to the antenna complex beta subunit family. The core complex is formed by different alpha and beta chains, binding bacteriochlorophyll molecules, and arranged most probably in tetrameric structures disposed around the reaction center. The non-pigmented gamma chains may constitute additional components.

The protein resides in the cell inner membrane. Antenna complexes are light-harvesting systems, which transfer the excitation energy to the reaction centers. The sequence is that of Light-harvesting protein B-880 beta chain from Afifella marina (Rhodobium marinum).